Reading from the N-terminus, the 159-residue chain is Large ribosomal subunit protein bL17 (159 aa).

Residues 124–135 are compositionally biased toward low complexity; sequence EANRATRAAASK. Residues 124 to 159 form a disordered region; sequence EANRATRAAASKQAEEAKAEEAEATEAEAEETTEEK. Over residues 145–159 the composition is skewed to acidic residues; sequence AEATEAEAEETTEEK.

The protein belongs to the bacterial ribosomal protein bL17 family. As to quaternary structure, part of the 50S ribosomal subunit. Contacts protein L32.

The chain is Large ribosomal subunit protein bL17 from Corynebacterium aurimucosum (strain ATCC 700975 / DSM 44827 / CIP 107346 / CN-1) (Corynebacterium nigricans).